A 383-amino-acid chain; its full sequence is Succinyl-diaminopimelate desuccinylase (383 aa).

His-72 provides a ligand contact to Zn(2+). Residue Asp-74 is part of the active site. A Zn(2+)-binding site is contributed by Asp-105. Glu-137 functions as the Proton acceptor in the catalytic mechanism. Glu-138, Glu-167, and His-352 together coordinate Zn(2+).

This sequence belongs to the peptidase M20A family. DapE subfamily. Homodimer. The cofactor is Zn(2+). Requires Co(2+) as cofactor.

It catalyses the reaction N-succinyl-(2S,6S)-2,6-diaminopimelate + H2O = (2S,6S)-2,6-diaminopimelate + succinate. Its pathway is amino-acid biosynthesis; L-lysine biosynthesis via DAP pathway; LL-2,6-diaminopimelate from (S)-tetrahydrodipicolinate (succinylase route): step 3/3. Catalyzes the hydrolysis of N-succinyl-L,L-diaminopimelic acid (SDAP), forming succinate and LL-2,6-diaminopimelate (DAP), an intermediate involved in the bacterial biosynthesis of lysine and meso-diaminopimelic acid, an essential component of bacterial cell walls. The polypeptide is Succinyl-diaminopimelate desuccinylase (Ehrlichia ruminantium (strain Gardel)).